A 375-amino-acid chain; its full sequence is NADH-ubiquinone oxidoreductase 40 kDa subunit, mitochondrial (375 aa).

The N-terminal 26 residues, 1–26 (MAPLTAAMRSTPRIIVSNAFGFQRRA), are a transit peptide targeting the mitochondrion.

This sequence belongs to the complex I NDUFA9 subunit family. As to quaternary structure, complex I is composed of about 40 different subunits. FAD is required as a cofactor.

The protein localises to the mitochondrion matrix. Its function is as follows. Accessory subunit of the mitochondrial membrane respiratory chain NADH dehydrogenase (Complex I), that is believed not to be involved in catalysis. Complex I functions in the transfer of electrons from NADH to the respiratory chain. The immediate electron acceptor for the enzyme is believed to be ubiquinone. The protein is NADH-ubiquinone oxidoreductase 40 kDa subunit, mitochondrial (nuo40) of Neurospora crassa (strain ATCC 24698 / 74-OR23-1A / CBS 708.71 / DSM 1257 / FGSC 987).